A 140-amino-acid chain; its full sequence is MEKKLMRIGVSLPGELLDKFDKTLMKRGYSSRSEGIRDAIRTYNQHYEWMQQIKGARAATISLVYDCSKKGITSTLAKIQHEYIDLITSSVHFHIEEDFCFETIILEGEGEKIVELAEKILSLKGVKHSRLTTMPEVKTE.

4 residues coordinate Ni(2+): His81, His92, His94, and Cys100.

Belongs to the transcriptional regulatory CopG/NikR family. Ni(2+) serves as cofactor.

In terms of biological role, transcriptional regulator. This Methanosarcina acetivorans (strain ATCC 35395 / DSM 2834 / JCM 12185 / C2A) protein is Putative nickel-responsive regulator 2.